We begin with the raw amino-acid sequence, 489 residues long: Glycogen synthase (489 aa).

Arg20 provides a ligand contact to ADP-alpha-D-glucose.

Belongs to the glycosyltransferase 1 family. Bacterial/plant glycogen synthase subfamily.

It catalyses the reaction [(1-&gt;4)-alpha-D-glucosyl](n) + ADP-alpha-D-glucose = [(1-&gt;4)-alpha-D-glucosyl](n+1) + ADP + H(+). Its pathway is glycan biosynthesis; glycogen biosynthesis. Synthesizes alpha-1,4-glucan chains using ADP-glucose. The polypeptide is Glycogen synthase (Chlorobium phaeobacteroides (strain DSM 266 / SMG 266 / 2430)).